Here is a 195-residue protein sequence, read N- to C-terminus: Dephospho-CoA kinase (195 aa).

The 193-residue stretch at 3–195 (IVGLTGGIGS…IALHENYLNH (193 aa)) folds into the DPCK domain. Position 11-16 (11-16 (GSGKSA)) interacts with ATP.

The protein belongs to the CoaE family.

It localises to the cytoplasm. The enzyme catalyses 3'-dephospho-CoA + ATP = ADP + CoA + H(+). Its pathway is cofactor biosynthesis; coenzyme A biosynthesis; CoA from (R)-pantothenate: step 5/5. Catalyzes the phosphorylation of the 3'-hydroxyl group of dephosphocoenzyme A to form coenzyme A. This is Dephospho-CoA kinase from Acinetobacter baylyi (strain ATCC 33305 / BD413 / ADP1).